We begin with the raw amino-acid sequence, 306 residues long: Secretory carrier-associated membrane protein 1 (306 aa).

The interval 1–66 (MAGRYDSNPF…LPPEPAAFGA (66 aa)) is disordered. At 1 to 141 (MAGRYDSNPF…EIPSHLQRMQ (141 aa)) the chain is on the cytoplasmic side. Residues 25 to 36 (KAGGQPSYGGGA) are compositionally biased toward gly residues. The span at 40–55 (PNPRNVPSVSSNSRLS) shows a compositional bias: low complexity. Positions 72–109 (LDSSKDLKNREKELQAREAELNKREKELKRREEAAARA) form a coiled coil. 4 helical membrane passes run 142–162 (YVAF…VIAV), 174–194 (IWLL…VLWY), 209–229 (FGLF…SAVA), and 257–277 (IFYF…IWVI). Over 278 to 306 (QQVYMYFRGSGKAAEMKRDATRGAMRAAF) the chain is Cytoplasmic.

It belongs to the SCAMP family.

The protein resides in the cell membrane. It is found in the cytoplasmic vesicle. Its subcellular location is the secretory vesicle membrane. Probably involved in membrane trafficking. The polypeptide is Secretory carrier-associated membrane protein 1 (SCAMP1) (Oryza sativa subsp. japonica (Rice)).